The primary structure comprises 2368 residues: Serine/threonine-protein kinase MEC1 (2368 aa).

An FAT domain is found at 1399-1944; that stretch reads LLAQRSLETD…LWYITALVNS (546 aa). The PI3K/PI4K catalytic domain maps to 2049–2352; that stretch reads FGSSYKVFSS…QTETLIQEAT (304 aa). The G-loop stretch occupies residues 2055–2061; that stretch reads VFSSLKK. The tract at residues 2140-2368 is binding to the RPA complex; sequence SILSTKYESL…KMYIGWLPFW (229 aa). The segment at 2221 to 2229 is catalytic loop; it reads GLGDRHCEN. The segment at 2241–2265 is activation loop; that stretch reads HVDFDCLFEKGKRLPVPEIVPFRLT. The 33-residue stretch at 2336–2368 folds into the FATC domain; that stretch reads LVLSVAGQTETLIQEATSEDNLSKMYIGWLPFW.

Belongs to the PI3/PI4-kinase family. ATM subfamily. In terms of assembly, interacts with LCD1, which is required for localization MEC1 to the RPA complex. Interacts directly with the RPA subunits RFA1 and RFA2.

The protein localises to the nucleus. It carries out the reaction L-seryl-[protein] + ATP = O-phospho-L-seryl-[protein] + ADP + H(+). It catalyses the reaction L-threonyl-[protein] + ATP = O-phospho-L-threonyl-[protein] + ADP + H(+). Serine/threonine protein kinase which activates checkpoint signaling upon genotoxic stresses such as ionizing radiation (IR), ultraviolet light (UV), or DNA replication stalling, thereby acting as a DNA damage sensor. Recognizes the substrate consensus sequence [ST]-Q. Recruited in complex with protein LCD1 by the single-strand-binding protein complex RPA to DNA lesions in order to initiate the DNA repair by homologous recombination, after the MRX-complex and TEL1 are displaced. Phosphorylates LCD1 and RPA2, a subunit of RPA, involved in DNA replication, repair and recombination. Phosphorylates RAD9, CHK1 and RAD53, which leads to the activation of the CHK1 and RAD53 kinases involved in DNA damage repair cascade. Phosphorylates histone H2A to form H2AS128ph (gamma-H2A) at sites of DNA damage, also involved in the regulation of DNA damage response mechanism. Also phosphorylates SLX4 and RTT107 which are proteins involved in genome stability. Required for cell growth and meiotic recombination. The protein is Serine/threonine-protein kinase MEC1 (MEC1) of Saccharomyces cerevisiae (strain ATCC 204508 / S288c) (Baker's yeast).